The following is a 253-amino-acid chain: Ubiquinone/menaquinone biosynthesis C-methyltransferase UbiE (253 aa).

Residues threonine 76, aspartate 97, and 125 to 126 (DA) contribute to the S-adenosyl-L-methionine site.

The protein belongs to the class I-like SAM-binding methyltransferase superfamily. MenG/UbiE family.

The catalysed reaction is a 2-demethylmenaquinol + S-adenosyl-L-methionine = a menaquinol + S-adenosyl-L-homocysteine + H(+). The enzyme catalyses a 2-methoxy-6-(all-trans-polyprenyl)benzene-1,4-diol + S-adenosyl-L-methionine = a 5-methoxy-2-methyl-3-(all-trans-polyprenyl)benzene-1,4-diol + S-adenosyl-L-homocysteine + H(+). It participates in quinol/quinone metabolism; menaquinone biosynthesis; menaquinol from 1,4-dihydroxy-2-naphthoate: step 2/2. Its pathway is cofactor biosynthesis; ubiquinone biosynthesis. Functionally, methyltransferase required for the conversion of demethylmenaquinol (DMKH2) to menaquinol (MKH2) and the conversion of 2-polyprenyl-6-methoxy-1,4-benzoquinol (DDMQH2) to 2-polyprenyl-3-methyl-6-methoxy-1,4-benzoquinol (DMQH2). This is Ubiquinone/menaquinone biosynthesis C-methyltransferase UbiE from Azotobacter vinelandii (strain DJ / ATCC BAA-1303).